We begin with the raw amino-acid sequence, 596 residues long: Proline--tRNA ligase (596 aa).

The protein belongs to the class-II aminoacyl-tRNA synthetase family. ProS type 1 subfamily. Homodimer.

The protein resides in the cytoplasm. It catalyses the reaction tRNA(Pro) + L-proline + ATP = L-prolyl-tRNA(Pro) + AMP + diphosphate. Its function is as follows. Catalyzes the attachment of proline to tRNA(Pro) in a two-step reaction: proline is first activated by ATP to form Pro-AMP and then transferred to the acceptor end of tRNA(Pro). As ProRS can inadvertently accommodate and process non-cognate amino acids such as alanine and cysteine, to avoid such errors it has two additional distinct editing activities against alanine. One activity is designated as 'pretransfer' editing and involves the tRNA(Pro)-independent hydrolysis of activated Ala-AMP. The other activity is designated 'posttransfer' editing and involves deacylation of mischarged Ala-tRNA(Pro). The misacylated Cys-tRNA(Pro) is not edited by ProRS. This Prochlorococcus marinus (strain NATL2A) protein is Proline--tRNA ligase.